The sequence spans 358 residues: Protein PXR1 (358 aa).

Disordered regions lie at residues 1 to 26 (MGLAAPKNRSKISNDPQNTTWANNTS) and 146 to 342 (EVKT…KSAT). The segment covering 11-26 (KISNDPQNTTWANNTS) has biased composition (polar residues). One can recognise a G-patch domain in the interval 25–79 (TSRFGHRILTSQGWQPGDSLGASDAAHAAHYTVASQSHIRVLLKDDNLGLGAKRG). Basic and acidic residues-rich tracts occupy residues 146–171 (EVKTETQAKVEVKSEPESDGAKEDDR) and 199–217 (SMDLRDQAKKDIAAESSKD). Positions 218–227 (KKGKKSKKDK) are enriched in basic residues. Acidic residues predominate over residues 287–299 (DVEDLSSESEDES). Polar residues predominate over residues 300 to 315 (TPSASRPATGTSTPTV). Residues 328–339 (HSVRQKWIRSKK) are compositionally biased toward basic residues.

This sequence belongs to the PINX1 family.

It localises to the nucleus. It is found in the nucleolus. Functionally, involved in rRNA-processing at A0, A1 and A2 sites and negatively regulates telomerase. The protein is Protein PXR1 (PXR1) of Phaeosphaeria nodorum (strain SN15 / ATCC MYA-4574 / FGSC 10173) (Glume blotch fungus).